The chain runs to 266 residues: Glucosamine-6-phosphate deaminase (266 aa).

The active-site Proton acceptor; for enolization step is Asp-72. Residue Asp-141 is the For ring-opening step of the active site. His-143 acts as the Proton acceptor; for ring-opening step in catalysis. The active-site For ring-opening step is the Glu-148.

It belongs to the glucosamine/galactosamine-6-phosphate isomerase family. NagB subfamily. Homohexamer; trimer of disulfide-linked dimers.

It catalyses the reaction alpha-D-glucosamine 6-phosphate + H2O = beta-D-fructose 6-phosphate + NH4(+). It functions in the pathway amino-sugar metabolism; N-acetylneuraminate degradation; D-fructose 6-phosphate from N-acetylneuraminate: step 5/5. Allosterically activated by N-acetylglucosamine 6-phosphate (GlcNAc6P). Its function is as follows. Catalyzes the reversible isomerization-deamination of glucosamine 6-phosphate (GlcN6P) to form fructose 6-phosphate (Fru6P) and ammonium ion. In Escherichia coli O6:H1 (strain CFT073 / ATCC 700928 / UPEC), this protein is Glucosamine-6-phosphate deaminase.